Consider the following 253-residue polypeptide: MDEATGETETQDFMNVESFSQLPFIRRPKDKNPKPIRVFGKDFTGRDFSITTGQEDYTDPYQTKNKEEEEEEDQTGDNSTDNNSISHNRRFECHYCFRNFPTSQALGGHQNAHKRERQLAKRGVSSYFYHPDNNPYSYRHYPSWTNGPLTAARSYGGFSSGPKPSGYYTRPSYGSQLGLWRLPPRVQGVYNSNAAFTSNGSSSSSNSTLPLLTRSQTQLSSQVGGSAAQNRMSSYGYGLSPNVQDHVSLDLHL.

The segment covering 1–10 (MDEATGETET) has biased composition (acidic residues). A disordered region spans residues 1-85 (MDEATGETET…GDNSTDNNSI (85 aa)). Polar residues-rich tracts occupy residues 11–21 (QDFMNVESFSQ), 49–63 (SITTGQEDYTDPYQT), and 76–85 (GDNSTDNNSI). The segment at 91–113 (FECHYCFRNFPTSQALGGHQNAH) adopts a C2H2-type zinc-finger fold.

In terms of tissue distribution, expressed in inflorescence meristems, floral meristems and stem epidermis.

It is found in the nucleus. Functionally, probable transcription factor required for the initiation of inflorescence trichomes in response to gibberellin (GA). Mediates the induction of GL1 expression by GA in inflorescence organs and is antagonized in its action by the DELLA repressor GAI. Acts upstream of the trichome initiation regulators GL1 and GL3, and downstream of the GA signaling repressor SPINDLY (SPY). Does not play a significant role in the cytokinin response. Controls trichome branching through GA signaling. Acts downstream of the key regulator STICHEL (STI) in an endoreduplication-independent pathway. Controls trichome cell division indirectly by acting downstream of a key endoreduplication regulator SIAMESE (SIM). In Arabidopsis thaliana (Mouse-ear cress), this protein is Zinc finger protein GIS (GIS).